The chain runs to 182 residues: Ribosome-recycling factor (182 aa).

This sequence belongs to the RRF family.

Its subcellular location is the cytoplasm. Functionally, responsible for the release of ribosomes from messenger RNA at the termination of protein biosynthesis. May increase the efficiency of translation by recycling ribosomes from one round of translation to another. The polypeptide is Ribosome-recycling factor (Synechococcus sp. (strain WH7803)).